Reading from the N-terminus, the 168-residue chain is I-Kappa-B like protein G2 (168 aa).

ANK repeat units lie at residues 56 to 88 (SQRQCVHIVVCEDKVNAIKKLKVLLEMGADING) and 93 to 123 (GGNTPLHLAVHSNNYKLVKWLCKQPSINKTA).

The protein belongs to the polydnaviridae I-Kappa-B-like protein family.

Functionally, suppresses the host immune response through NF-kappa-B inactivation. Possesses ankyrin repeat domains required for NF-kappa-B binding but lacks the regulatory regions required for dissociation from NF-kappa-B and degradation. Therefore, prevents host NF-kappa-B release and subsequent activation. This chain is I-Kappa-B like protein G2 (G4), found in Microplitis demolitor (Parasitoid wasp).